A 233-amino-acid chain; its full sequence is Ribosome maturation factor RimM (233 aa).

Positions 1–51 (MKRKQDSKGAGSRGQGAGEKKQGAGGRGQGEKKQKKSPVPSPQSPVPDPDE) are disordered. Positions 11-28 (GSRGQGAGEKKQGAGGRG) are enriched in gly residues. The PRC barrel domain maps to 145–226 (GEDEYHVVDL…RIEITPPPGL (82 aa)).

It belongs to the RimM family. As to quaternary structure, binds ribosomal protein uS19.

It is found in the cytoplasm. Functionally, an accessory protein needed during the final step in the assembly of 30S ribosomal subunit, possibly for assembly of the head region. Essential for efficient processing of 16S rRNA. May be needed both before and after RbfA during the maturation of 16S rRNA. It has affinity for free ribosomal 30S subunits but not for 70S ribosomes. In Trichormus variabilis (strain ATCC 29413 / PCC 7937) (Anabaena variabilis), this protein is Ribosome maturation factor RimM.